Here is a 445-residue protein sequence, read N- to C-terminus: FAS-associated factor 2 (445 aa).

A2 carries the post-translational modification N-acetylalanine. The UBA domain occupies 12 to 48 (EQTEKLLQFQDLTGIESMDQCRHTLEQHNWNIEAAVQ). N6-acetyllysine is present on K167. Residues 275–350 (SERLEREERN…EEKERKLECL (76 aa)) are a coiled coil. A disordered region spans residues 299–361 (ASLRADQEKE…PEPSPDDPES (63 aa)). A compositionally biased stretch (basic and acidic residues) spans 303-348 (ADQEKERKKREERERKRRKEEEVQQQKLAEERRRQNLQEEKERKLE). Residues 357 to 439 (DDPESVKIIF…GLSHTEVLFV (83 aa)) enclose the UBX domain.

In terms of assembly, identified in a complex that contains SEL1L, OS9, FAF2/UBXD8, UBE2J1/UBC6E and AUP1. Interacts with YOD1. Interacts (via N-terminus) with UBQLN2 (via C-terminus). Interacts with PNPLA2 and UBAC2. Interacts with ZFAND2B; probably through VCP. Interacts with LMBR1L. Broadly expressed, with highest levels in brain.

Its subcellular location is the cytoplasm. The protein resides in the lipid droplet. It localises to the endoplasmic reticulum. Its function is as follows. Plays an important role in endoplasmic reticulum-associated degradation (ERAD) that mediates ubiquitin-dependent degradation of misfolded endoplasmic reticulum proteins. By controlling the steady-state expression of the IGF1R receptor, indirectly regulates the insulin-like growth factor receptor signaling pathway. Involved in inhibition of lipid droplet degradation by binding to phospholipase PNPL2 and inhibiting its activity by promoting dissociation of PNPL2 from its endogenous activator, ABHD5 which inhibits the rate of triacylglycerol hydrolysis. Involved in stress granule disassembly: associates with ubiquitinated G3BP1 in response to heat shock, thereby promoting interaction between ubiquitinated G3BP1 and VCP, followed by G3BP1 extraction from stress granules and stress granule disassembly. This is FAS-associated factor 2 from Homo sapiens (Human).